Reading from the N-terminus, the 501-residue chain is Lysine--tRNA ligase (501 aa).

Residues glutamate 411 and glutamate 418 each coordinate Mg(2+).

Belongs to the class-II aminoacyl-tRNA synthetase family. Homodimer. Mg(2+) serves as cofactor.

The protein resides in the cytoplasm. The enzyme catalyses tRNA(Lys) + L-lysine + ATP = L-lysyl-tRNA(Lys) + AMP + diphosphate. In Magnetococcus marinus (strain ATCC BAA-1437 / JCM 17883 / MC-1), this protein is Lysine--tRNA ligase.